The following is a 177-amino-acid chain: ATP synthase subunit delta (177 aa).

This sequence belongs to the ATPase delta chain family. As to quaternary structure, F-type ATPases have 2 components, F(1) - the catalytic core - and F(0) - the membrane proton channel. F(1) has five subunits: alpha(3), beta(3), gamma(1), delta(1), epsilon(1). F(0) has three main subunits: a(1), b(2) and c(10-14). The alpha and beta chains form an alternating ring which encloses part of the gamma chain. F(1) is attached to F(0) by a central stalk formed by the gamma and epsilon chains, while a peripheral stalk is formed by the delta and b chains.

It is found in the cell inner membrane. F(1)F(0) ATP synthase produces ATP from ADP in the presence of a proton or sodium gradient. F-type ATPases consist of two structural domains, F(1) containing the extramembraneous catalytic core and F(0) containing the membrane proton channel, linked together by a central stalk and a peripheral stalk. During catalysis, ATP synthesis in the catalytic domain of F(1) is coupled via a rotary mechanism of the central stalk subunits to proton translocation. Functionally, this protein is part of the stalk that links CF(0) to CF(1). It either transmits conformational changes from CF(0) to CF(1) or is implicated in proton conduction. This Actinobacillus pleuropneumoniae serotype 7 (strain AP76) protein is ATP synthase subunit delta.